We begin with the raw amino-acid sequence, 396 residues long: ATP-dependent RNA helicase eIF4A (396 aa).

The short motif at 22-50 (YSFDDLNLKPNIVRGIFGYGYESPSAIQQ) is the Q motif element. In terms of domain architecture, Helicase ATP-binding spans 53 to 223 (ILPITEGRDV…TKFMNNPVRI (171 aa)). 66–73 (AQSGTGKT) is a binding site for ATP. The short motif at 171–174 (DEAD) is the DEAD box element. Positions 234–395 (GIKQFYINVE…EMPANIGELF (162 aa)) constitute a Helicase C-terminal domain.

It belongs to the DEAD box helicase family. eIF4A subfamily. Component of the eIF4F complex, which composition varies with external and internal environmental conditions. It is composed of at least eIF4A, eIF4E and eIF4G.

The protein localises to the cytoplasm. The enzyme catalyses ATP + H2O = ADP + phosphate + H(+). In terms of biological role, ATP-dependent RNA helicase which is a subunit of the eIF4F complex involved in cap recognition and is required for mRNA binding to ribosome. In the current model of translation initiation, eIF4A unwinds RNA secondary structures in the 5'-UTR of mRNAs which is necessary to allow efficient binding of the small ribosomal subunit, and subsequent scanning for the initiator codon. The polypeptide is ATP-dependent RNA helicase eIF4A (TIF1) (Meyerozyma guilliermondii (strain ATCC 6260 / CBS 566 / DSM 6381 / JCM 1539 / NBRC 10279 / NRRL Y-324) (Yeast)).